A 457-amino-acid polypeptide reads, in one-letter code: Serine--tRNA ligase (457 aa).

Residue 252–254 (TAE) coordinates L-serine. ATP is bound by residues 283-285 (RKE) and valine 299. L-serine is bound at residue glutamate 306. An ATP-binding site is contributed by 370 to 373 (EMVS). Threonine 406 lines the L-serine pocket.

The protein belongs to the class-II aminoacyl-tRNA synthetase family. Type-1 seryl-tRNA synthetase subfamily. Homodimer. The tRNA molecule binds across the dimer.

It localises to the cytoplasm. The enzyme catalyses tRNA(Ser) + L-serine + ATP = L-seryl-tRNA(Ser) + AMP + diphosphate + H(+). The catalysed reaction is tRNA(Sec) + L-serine + ATP = L-seryl-tRNA(Sec) + AMP + diphosphate + H(+). It participates in aminoacyl-tRNA biosynthesis; selenocysteinyl-tRNA(Sec) biosynthesis; L-seryl-tRNA(Sec) from L-serine and tRNA(Sec): step 1/1. Catalyzes the attachment of serine to tRNA(Ser). Is also able to aminoacylate tRNA(Sec) with serine, to form the misacylated tRNA L-seryl-tRNA(Sec), which will be further converted into selenocysteinyl-tRNA(Sec). This is Serine--tRNA ligase from Saccharolobus islandicus (strain Y.N.15.51 / Yellowstone #2) (Sulfolobus islandicus).